The chain runs to 90 residues: UPF0297 protein LVIS_1222 (90 aa).

This sequence belongs to the UPF0297 family.

The polypeptide is UPF0297 protein LVIS_1222 (Levilactobacillus brevis (strain ATCC 367 / BCRC 12310 / CIP 105137 / JCM 1170 / LMG 11437 / NCIMB 947 / NCTC 947) (Lactobacillus brevis)).